The primary structure comprises 274 residues: Ribose-5-phosphate isomerase (274 aa).

Belongs to the ribose 5-phosphate isomerase family.

It localises to the cytoplasm. The enzyme catalyses aldehydo-D-ribose 5-phosphate = D-ribulose 5-phosphate. It participates in carbohydrate degradation; pentose phosphate pathway; D-ribose 5-phosphate from D-ribulose 5-phosphate (non-oxidative stage): step 1/1. This Schizosaccharomyces pombe (strain 972 / ATCC 24843) (Fission yeast) protein is Ribose-5-phosphate isomerase (rki1).